The following is a 339-amino-acid chain: Protein RecA (339 aa).

An ATP-binding site is contributed by 66-73 (GPESSGKT).

It belongs to the RecA family.

The protein resides in the cytoplasm. Can catalyze the hydrolysis of ATP in the presence of single-stranded DNA, the ATP-dependent uptake of single-stranded DNA by duplex DNA, and the ATP-dependent hybridization of homologous single-stranded DNAs. It interacts with LexA causing its activation and leading to its autocatalytic cleavage. The chain is Protein RecA from Geobacter metallireducens (strain ATCC 53774 / DSM 7210 / GS-15).